A 248-amino-acid chain; its full sequence is Non-specific acid phosphatase (248 aa).

Positions 1–20 (MKKLLAVFCAGAFVSTSVFA) are cleaved as a signal peptide.

The protein belongs to the class A bacterial acid phosphatase family.

The protein resides in the periplasm. The enzyme catalyses a phosphate monoester + H2O = an alcohol + phosphate. This Providencia stuartii protein is Non-specific acid phosphatase (phoN).